Here is a 236-residue protein sequence, read N- to C-terminus: UPF0257 lipoprotein YnfC (236 aa).

The signal sequence occupies residues 1–16 (MKYKLLPCLLAILLTG). Cysteine 17 carries N-palmitoyl cysteine lipidation. Cysteine 17 carries the S-diacylglycerol cysteine lipid modification.

It belongs to the UPF0257 family.

It is found in the cell membrane. This Escherichia coli O45:K1 (strain S88 / ExPEC) protein is UPF0257 lipoprotein YnfC.